Here is a 248-residue protein sequence, read N- to C-terminus: E3 SUMO-protein ligase NSE2 (248 aa).

Met1 is subject to N-acetylmethionine. Glycyl lysine isopeptide (Lys-Gly) (interchain with G-Cter in SUMO2) cross-links involve residues Lys92 and Lys109. At Ser118 the chain carries Phosphoserine. Glycyl lysine isopeptide (Lys-Gly) (interchain with G-Cter in SUMO2) cross-links involve residues Lys127 and Lys132. The SP-RING-type zinc finger occupies 156-242 (VDEDMIVTQS…LRRAIESHKK (87 aa)). Positions 187, 189, 212, and 217 each coordinate Zn(2+).

It belongs to the NSE2 family. Component of the SMC5-SMC6 complex which consists at least of SMC5, SMC6, NSMCE2, NSMCE1, NSMCE4A or EID3 and NSMCE3. Sumoylated, possibly via autosumoylation.

The protein localises to the nucleus. It is found in the chromosome. The protein resides in the telomere. It localises to the PML body. It participates in protein modification; protein sumoylation. In terms of biological role, E3 SUMO-protein ligase component of the SMC5-SMC6 complex, a complex involved in DNA double-strand break repair by homologous recombination. Is not be required for the stability of the complex. The complex may promote sister chromatid homologous recombination by recruiting the SMC1-SMC3 cohesin complex to double-strand breaks. Acts as an E3 ligase mediating SUMO attachment to various proteins such as SMC6L1 and TSNAX, the shelterin complex subunits TERF1, TERF2, TINF2 and TERF2IP, RAD51AP1, and maybe the cohesin components RAD21 and STAG2. Required for recruitment of telomeres to PML nuclear bodies. Required for sister chromatid cohesion during prometaphase and mitotic progression. This Bos taurus (Bovine) protein is E3 SUMO-protein ligase NSE2 (NSMCE2).